A 258-amino-acid polypeptide reads, in one-letter code: Deoxyribose-phosphate aldolase (258 aa).

Aspartate 101 serves as the catalytic Proton donor/acceptor. Catalysis depends on lysine 166, which acts as the Schiff-base intermediate with acetaldehyde. Lysine 200 acts as the Proton donor/acceptor in catalysis.

Belongs to the DeoC/FbaB aldolase family. DeoC type 2 subfamily.

Its subcellular location is the cytoplasm. It carries out the reaction 2-deoxy-D-ribose 5-phosphate = D-glyceraldehyde 3-phosphate + acetaldehyde. It functions in the pathway carbohydrate degradation; 2-deoxy-D-ribose 1-phosphate degradation; D-glyceraldehyde 3-phosphate and acetaldehyde from 2-deoxy-alpha-D-ribose 1-phosphate: step 2/2. Catalyzes a reversible aldol reaction between acetaldehyde and D-glyceraldehyde 3-phosphate to generate 2-deoxy-D-ribose 5-phosphate. This is Deoxyribose-phosphate aldolase from Actinobacillus pleuropneumoniae serotype 5b (strain L20).